A 270-amino-acid polypeptide reads, in one-letter code: Protein US2 homolog (270 aa).

This sequence belongs to the herpesviridae US2 family.

The sequence is that of Protein US2 homolog (MDV091) from Gallid herpesvirus 2 (strain Chicken/Md5/ATCC VR-987) (GaHV-2).